A 167-amino-acid polypeptide reads, in one-letter code: UPF0254 protein MJ1251 (167 aa).

It belongs to the UPF0254 family.

The chain is UPF0254 protein MJ1251 from Methanocaldococcus jannaschii (strain ATCC 43067 / DSM 2661 / JAL-1 / JCM 10045 / NBRC 100440) (Methanococcus jannaschii).